A 524-amino-acid polypeptide reads, in one-letter code: uncharacterized protein (524 aa).

A helical transmembrane segment spans residues 13 to 33; it reads EFILLILGMTVVGIVITMGLV.

It localises to the membrane. This is an uncharacterized protein from Methanocaldococcus jannaschii (strain ATCC 43067 / DSM 2661 / JAL-1 / JCM 10045 / NBRC 100440) (Methanococcus jannaschii).